The following is a 114-amino-acid chain: Large ribosomal subunit protein bL19 (114 aa).

The protein belongs to the bacterial ribosomal protein bL19 family.

Its function is as follows. This protein is located at the 30S-50S ribosomal subunit interface and may play a role in the structure and function of the aminoacyl-tRNA binding site. In Listeria monocytogenes serovar 1/2a (strain ATCC BAA-679 / EGD-e), this protein is Large ribosomal subunit protein bL19 (rplS).